The chain runs to 373 residues: tRNA (guanine(26)-N(2))-dimethyltransferase (373 aa).

Positions 2-365 (KIISEGETKL…AELSDLVVLI (364 aa)) constitute a Trm1 methyltransferase domain. Residues Arg-35, Arg-66, Asp-86, Asp-113, and Ala-114 each contribute to the S-adenosyl-L-methionine site.

This sequence belongs to the class I-like SAM-binding methyltransferase superfamily. Trm1 family.

The catalysed reaction is guanosine(26) in tRNA + 2 S-adenosyl-L-methionine = N(2)-dimethylguanosine(26) in tRNA + 2 S-adenosyl-L-homocysteine + 2 H(+). In terms of biological role, dimethylates a single guanine residue at position 26 of a number of tRNAs using S-adenosyl-L-methionine as donor of the methyl groups. This is tRNA (guanine(26)-N(2))-dimethyltransferase from Methanococcus maripaludis (strain C7 / ATCC BAA-1331).